Reading from the N-terminus, the 88-residue chain is Large ribosomal subunit protein bL27 (88 aa).

A disordered region spans residues 1 to 24 (MAHKKGTGSTRNGRDSNAKRLGVK).

It belongs to the bacterial ribosomal protein bL27 family.

In Synechococcus sp. (strain CC9605), this protein is Large ribosomal subunit protein bL27.